Here is a 510-residue protein sequence, read N- to C-terminus: Pantetheinase (510 aa).

The signal sequence occupies residues 1 to 22 (MIMSQLLNYVAVLFFCVSRASS). One can recognise a CN hydrolase domain in the interval 31–307 (YEHAVILPNA…GKLLLAQLDS (277 aa)). N-linked (GlcNAc...) asparagine glycosylation occurs at asparagine 39. Residue glutamate 80 is the Proton acceptor of the active site. N-linked (GlcNAc...) asparagine glycans are attached at residues asparagine 87 and asparagine 147. Lysine 179 functions as the Proton donor in the catalytic mechanism. The N-linked (GlcNAc...) asparagine glycan is linked to asparagine 201. The active-site Nucleophile is the cysteine 212. Asparagine 316 and asparagine 354 each carry an N-linked (GlcNAc...) asparagine glycan. Aspartate 492 carries GPI-anchor amidated aspartate lipidation. Residues 493–510 (LTTQALRLNPKTDAWKSK) constitute a propeptide, removed in mature form. O-linked (GalNAc...) threonine glycosylation is present at threonine 504.

It belongs to the carbon-nitrogen hydrolase superfamily. BTD/VNN family. In terms of assembly, monomer.

It localises to the cell membrane. The catalysed reaction is (R)-pantetheine + H2O = cysteamine + (R)-pantothenate. Its function is as follows. Amidohydrolase that hydrolyzes specifically one of the carboamide linkages in D-pantetheine thus recycling pantothenic acid (vitamin B5) and releasing cysteamine. The polypeptide is Pantetheinase (VNN1) (Bos taurus (Bovine)).